The primary structure comprises 144 residues: MFFGTFNHAIDAKGRTSLPAKFREALAAAGEPRIVLMQYPHWRAVQALPQSVWNELVKKVMEASPLDARWQRNVLKFVSSAHEVDLDVHGRVLVPPPLREWAGLQKDVVWVGMGRTIHLYDRAAYDEQMSAEIPADQVVDFFRT.

SpoVT-AbrB domains are found at residues 5-50 (TFNH…ALPQ) and 81-124 (AHEV…DRAA).

This sequence belongs to the MraZ family. In terms of assembly, forms oligomers.

It is found in the cytoplasm. Its subcellular location is the nucleoid. The sequence is that of Transcriptional regulator MraZ from Anaeromyxobacter dehalogenans (strain 2CP-C).